A 549-amino-acid chain; its full sequence is Chaperonin GroEL 2 (549 aa).

ATP contacts are provided by residues Thr-30–Pro-33, Lys-51, Asp-87–Thr-91, Gly-415, Asn-479–Ala-481, and Asp-495.

This sequence belongs to the chaperonin (HSP60) family. In terms of assembly, forms a cylinder of 14 subunits composed of two heptameric rings stacked back-to-back. Interacts with the co-chaperonin GroES.

Its subcellular location is the cytoplasm. The catalysed reaction is ATP + H2O + a folded polypeptide = ADP + phosphate + an unfolded polypeptide.. Its function is as follows. Together with its co-chaperonin GroES, plays an essential role in assisting protein folding. The GroEL-GroES system forms a nano-cage that allows encapsulation of the non-native substrate proteins and provides a physical environment optimized to promote and accelerate protein folding. The chain is Chaperonin GroEL 2 from Polaromonas naphthalenivorans (strain CJ2).